The sequence spans 579 residues: Carboxysome shell carbonic anhydrase (579 aa).

Residues 72 to 95 (GGGRVRSARDQRQPGWVRRDKGAT) are disordered. Basic and acidic residues predominate over residues 78-93 (SARDQRQPGWVRRDKG). C240 provides a ligand contact to Zn(2+). Catalysis depends on D242, which acts as the Proton acceptor. Zn(2+)-binding residues include H308 and C319.

Belongs to the beta-class carbonic anhydrase family. CsoSCA subfamily. Homodimer. Requires Zn(2+) as cofactor.

It is found in the carboxysome. The catalysed reaction is hydrogencarbonate + H(+) = CO2 + H2O. Inhibited by dithiothreitol, partially inhibited by acetatzolamide and cyanide. Functionally, reversible hydration of carbon dioxide. Essential for photosynthetic carbon dioxide fixation, supplies CO(2) to RuBisCO (ribulose bisphosphate carboxylase, cbbL-cbbS) in the carboxysome. This chain is Carboxysome shell carbonic anhydrase, found in Parasynechococcus marenigrum (strain WH8102).